Consider the following 454-residue polypeptide: MITHISPLGSMDMLSQLEVDMLKRTASSDLYQLFRNCSLAVLNSGSLTDNSKELLSRFENFDINVLRRERGVKLELINPPEEAFVDGRIIRALQANLFAVLRDILFVYGQIHNTVRFPNLNLDNSVHITNLVFSILRNARALHVGEAPNMVVCWGGHSINENEYLYARRVGNQLGLRELNICTGCGPGAMEAPMKGAAVGHAQQRYKDSRFIGMTEPSIIAAEPPNPLVNELIIMPDIEKRLEAFVRIAHGIIIFPGGVGTAEELLYLLGILMNPANKDQVLPLILTGPKESADYFRVLDEFVVHTLGENARRHYRIIIDDAAEVARQMKKSMPLVKENRRDTGDAYSFNWSMRIAPDLQMPFEPSHENMANLKLYPDQPVEVLAADLRRAFSGIVAGNVKEVGIRAIEEFGPYKINGDKEIMRRMDDLLQGFVAQHRMKLPGSAYIPCYEICT.

It belongs to the LOG family.

The enzyme catalyses a pyrimidine ribonucleoside 5'-phosphate + H2O = a pyrimidine nucleobase + D-ribose 5-phosphate. It carries out the reaction AMP + H2O = adenine + D-ribose 5-phosphate. The catalysed reaction is GMP + H2O = guanine + D-ribose 5-phosphate. It catalyses the reaction CMP + H2O = cytosine + D-ribose 5-phosphate. The enzyme catalyses IMP + H2O = hypoxanthine + D-ribose 5-phosphate. It carries out the reaction UMP + H2O = D-ribose 5-phosphate + uracil. The catalysed reaction is dTMP + H2O = 2-deoxy-D-ribose 5-phosphate + thymine. In terms of biological role, catalyzes the hydrolysis of the N-glycosidic bond of diverse pyrimidine and purine nucleotide 5'-monophosphates, to form ribose 5-phosphate and the corresponding free base. Can use AMP, GMP, IMP, CMP, dTMP and UMP as substrates. Cannot catalyze the reverse reactions. May contribute to nucleoside pool homeostasis by degrading excess nucleotides and feeding back the ribose moiety to catabolism. This Escherichia coli O157:H7 protein is Pyrimidine/purine nucleotide 5'-monophosphate nucleosidase.